Consider the following 257-residue polypeptide: Urease accessory protein UreD (257 aa).

This sequence belongs to the UreD family. In terms of assembly, ureD, UreF and UreG form a complex that acts as a GTP-hydrolysis-dependent molecular chaperone, activating the urease apoprotein by helping to assemble the nickel containing metallocenter of UreC. The UreE protein probably delivers the nickel.

The protein resides in the cytoplasm. Required for maturation of urease via the functional incorporation of the urease nickel metallocenter. The protein is Urease accessory protein UreD of Ruegeria pomeroyi (strain ATCC 700808 / DSM 15171 / DSS-3) (Silicibacter pomeroyi).